We begin with the raw amino-acid sequence, 243 residues long: GrpE protein homolog, mitochondrial (243 aa).

Positions 56 to 79 are disordered; the sequence is KKEEPKDENDAAAAEEDANLTEEQ.

Belongs to the GrpE family. In terms of assembly, component of the PAM complex, at least composed of mtHsp70, MGE1, TIM44, PAM16, PAM17 and PAM18.

It localises to the mitochondrion matrix. In terms of biological role, essential component of the PAM complex, a complex required for the translocation of transit peptide-containing proteins from the inner membrane into the mitochondrial matrix in an ATP-dependent manner. Seems to control the nucleotide-dependent binding of SSC1 to substrate proteins. The polypeptide is GrpE protein homolog, mitochondrial (mge1) (Kluyveromyces lactis (strain ATCC 8585 / CBS 2359 / DSM 70799 / NBRC 1267 / NRRL Y-1140 / WM37) (Yeast)).